Consider the following 148-residue polypeptide: Receptor activity-modifying protein 1 (148 aa).

The signal sequence occupies residues 1-26 (MARGLRGLPRRGLWLLLVNHLFLATA). 3 disulfide bridges follow: Cys-27–Cys-82, Cys-40–Cys-72, and Cys-57–Cys-104. Residues 27–118 (CQDTDHAALL…RALQDPPSSV (92 aa)) lie on the Extracellular side of the membrane. Residues 119–140 (LCPFIVVPILATLLMTALVVWR) form a helical membrane-spanning segment. The Cytoplasmic segment spans residues 141 to 148 (SKRPEGIV).

This sequence belongs to the RAMP family. Heterodimer of CALCRL and RAMP1; the interaction induces allosteric modulation of CALCRL function and CGRP1/CALCA and CGRP2/CALCB ligand specificity. Heterodimer of CALCR and RAMP1; interaction forms the AMYR1 receptor complex for amylin/IAPP and CGRP1/CALCA ligands.

It localises to the cell membrane. In terms of biological role, accessory protein that interacts with and modulates the function of G-protein coupled receptors including calcitonin gene-related peptide type 1 receptor (CALCRL) and calcitonin receptor (CALCR). Required for the transport of CALCRL to the plasma membrane. Together with CALCRL, form the receptor complex for the calcitonin gene-related peptides CGRP1/CALCA and CGRP2/CALCB. Together with CALCR, form the AMYR1 receptor complex for amylin/IAPP and CGRP1/CALCA. The sequence is that of Receptor activity-modifying protein 1 (RAMP1) from Sus scrofa (Pig).